The following is a 128-amino-acid chain: UPF0325 protein YaeH (128 aa).

It belongs to the UPF0325 family.

In Escherichia fergusonii (strain ATCC 35469 / DSM 13698 / CCUG 18766 / IAM 14443 / JCM 21226 / LMG 7866 / NBRC 102419 / NCTC 12128 / CDC 0568-73), this protein is UPF0325 protein YaeH.